The primary structure comprises 994 residues: MTGLYSSMSFFLRTIVLLFSTSSFCNTFASLTQDSCHPDQRDALLEFKNEFKIWYPNGFLDIDGVLMDVTSYPKTKSWTKNSDCCYWDGITCDTKSGKVTGLDLSCSCLHGRLEPNSSLFRLQHLQSVNLAYNNFTNSPIPAEFSKFMRLERLNLSRSSFSGHISIKLLQLTNLVSLDLSSSFPYSPSSLSIEKPLFLHLLALNFMNLRELDMSSVDISSAIPIEFSYMWSLRSLTLKGCNLLGRFPNSVLLIPNLESISLDHNLNLEGSLPNFLRNNSLLKLSIYNTSFSGTIPNSISNLKHLTSLKLQQSAFSGRIPSSLRSLSHLSNLVLSENNFVGEIPSSVSNLKQLTLFDVSDNNLNGNFPSSLLNLNQLRYIDICSNHFTGFLPPTISQLSNLEFFSACDNSFTGSIPSSLFNISSLTTLGLSYNQLNDTTNIKNISLLHNLQRLLLDNNNFKASQVDLDVFLSLKRLVSLALSGIPLSTTNITSDSEFSSHLEYLELSGCNIIEFPEFIRNQRNLSSIDLSNNNIKGQVPNWLWRLPELSTVDLSNNSLIGFNGSLKALSGSKIVMLDLSSNAFQGPLFMPPRGIQYFLGSYNNFTGYIPPSICGLANPLILDLSNNNLHGLIPRCLEAQMSSLSVLNLRNNSLDGSLPNIFMNAKVLSSLDVSHNTLEGKLPASLAGCSALEILNVESNNINDTFPFWLNSLPKLQVLVLRSNNFRGTLHNVDGVWFGFPLLRITDVSHNDFVGTLPSDYFMNWTAISKSETELQYIGDPEDYGYYTSLVLMNKGVSMEMQRILTKYTVIDFAGNKIQGKIPESVGILKELHVLNLSSNAFTGHIPSSLANLTNLESLDISQNKIGGEIPPELGTLSSLEWINVSHNQLVGSIPQGTQFHRQNCSSYEGNPGIYGSSLKDVCGDIHAPRPPQAVLPHSSSSSSEEDELISWIAACLGFAPGMVFGLTMGYIMTSHKHEWFMDTFGRRKGRSTRTR.

Residues 1-25 form the signal peptide; sequence MTGLYSSMSFFLRTIVLLFSTSSFC. Residues 26–946 are Extracellular-facing; it reads NTFASLTQDS…SSSSSSEEDE (921 aa). N-linked (GlcNAc...) asparagine glycans are attached at residues Asn116, Asn134, and Asn154. 19 LRR repeats span residues 122-146, 148-171, 174-199, 205-228, 230-253, 254-278, 280-301, 302-325, 326-349, 350-373, 375-397, 398-421, 423-445, 446-471, 477-497, 498-520, 521-544, 546-569, and 571-595; these read LQHL…EFSK, MRLE…LLQL, LVSL…LFLH, FMNL…EFSY, WSLR…VLLI, PNLE…LRNN, LLKL…ISNL, KHLT…LRSL, SHLS…VSNL, KQLT…LLNL, QLRY…ISQL, SNLE…LFNI, SLTT…NISL, LHNL…VFLS, SLAL…SEFS, SHLE…IRNQ, RNLS…LWRL, ELST…ALSG, and KIVM…GIQY. N-linked (GlcNAc...) asparagine glycans are attached at residues Asn277 and Asn287. 3 N-linked (GlcNAc...) asparagine glycosylation sites follow: Asn420, Asn435, and Asn442. N-linked (GlcNAc...) asparagine glycosylation occurs at Asn489. N-linked (GlcNAc...) asparagine glycosylation is found at Asn522, Asn554, and Asn561. The LRR 20; degenerate repeat unit spans residues 597-613; that stretch reads LGSYNNFTGYIPPSICG. N-linked (GlcNAc...) asparagine glycosylation is present at Asn602. LRR repeat units lie at residues 614-637, 639-663, 665-687, 689-710, 711-737, 739-762, 803-827, 828-851, 852-875, and 877-900; these read LANP…CLEA, MSSL…FMNA, VLSS…LAGC, ALEI…WLNS, LPKL…VWFG, PLLR…YFMN, LTKY…VGIL, KELH…LANL, TNLE…LGTL, and SLEW…QFHR. Asn649 is a glycosylation site (N-linked (GlcNAc...) asparagine). Residue Asn701 is glycosylated (N-linked (GlcNAc...) asparagine). An N-linked (GlcNAc...) asparagine glycan is attached at Asn762. N-linked (GlcNAc...) asparagine glycosylation is found at Asn834 and Asn850. Asn882 and Asn902 each carry an N-linked (GlcNAc...) asparagine glycan. The helical transmembrane segment at 947 to 967 threads the bilayer; it reads LISWIAACLGFAPGMVFGLTM. Residues 968-994 are Cytoplasmic-facing; sequence GYIMTSHKHEWFMDTFGRRKGRSTRTR.

The protein belongs to the RLP family.

It is found in the cell membrane. The polypeptide is Receptor-like protein 6 (Arabidopsis thaliana (Mouse-ear cress)).